Reading from the N-terminus, the 501-residue chain is MLLQMAGRGKMVPCVCLGLLGVLCWVWVSFASFPDEQLSLGAMDAVERAAFQPQSALSEMEFASIGSYRGPGNLDHRSNKELPILLWWSAGLFPHFPGDTERIDCARSSCLATSNRKVQLYKRTASIIFYGTDFRAYEAPLPRLRHQTWALFHEESPMNNYLLSHGPGIRLFNYTATFRRESDYPLTLQWLPSLEYLLTPVPVPLEEKNRLRREGLAPVLYMQSHCDVPSDRDRYVQELMKYIQVDSYGKCLNNKPLAGNLEDTSTATGEEQTFMSFVARYKFHLALENGLCPDYMTEKLWRPLHQGCVPVYRGSSVVADWMPNERSAIIIDEFPSPQALAEYLLHLDENDDEYRKYLEFKSPKRITNARLLEALERREWGVNDMSKPNYLNGFECYVCDQENARLAAERAHRKAPKTNKPPEWKMANNSHMGCPLPSPGYGQVHHLPADDGWLQTWPQDYWQSLDQAEGLESLIRHNESDPSLLWKHIQNMAVRRARGKN.

Topologically, residues 1–10 (MLLQMAGRGK) are cytoplasmic. A helical; Signal-anchor for type II membrane protein membrane pass occupies residues 11 to 31 (MVPCVCLGLLGVLCWVWVSFA). At 32-501 (SFPDEQLSLG…MAVRRARGKN (470 aa)) the chain is on the lumenal side. An N-linked (GlcNAc...) asparagine glycan is attached at Asn173. Cys396 and Cys399 form a disulfide bridge. Residues Asn428 and Asn478 are each glycosylated (N-linked (GlcNAc...) asparagine).

The protein belongs to the glycosyltransferase 10 family.

The protein resides in the endoplasmic reticulum membrane. It carries out the reaction L-threonyl-[protein] + GDP-beta-L-fucose = 3-O-(alpha-L-fucosyl)-L-threonyl-[protein] + GDP + H(+). It catalyses the reaction L-seryl-[protein] + GDP-beta-L-fucose = 3-O-(alpha-L-fucosyl)-L-seryl-[protein] + GDP + H(+). It participates in protein modification; protein glycosylation. Protein O-fucosyltransferase that specifically catalyzes O-fucosylation of serine or threonine residues in EMI domains of target proteins. Attaches fucose through an O-glycosidic linkage. O-fucosylation of EMI domain-containing proteins may be required for facilitating protein folding and secretion. The sequence is that of GDP-fucose protein O-fucosyltransferase 4 (fut11) from Takifugu rubripes (Japanese pufferfish).